The primary structure comprises 461 residues: Peptidyl-prolyl cis-trans isomerase-like 4 (461 aa).

One can recognise a PPIase cyclophilin-type domain in the interval 1–171 (MSVLLETSLG…KDIRIRHTVI (171 aa)). The stretch at 205–234 (EELDDNMDEESMEKLRREREARAQALTLEM) forms a coiled coil. The RRM domain occupies 248–326 (NVLFVCKLNP…HRIHVDFSQS (79 aa)). The disordered stretch occupies residues 341 to 461 (KRSGQRGGFG…DERYRERRRR (121 aa)). 2 stretches are compositionally biased toward basic and acidic residues: residues 365 to 384 (DNAR…GDKA) and 398 to 461 (SNRD…RRRR).

The protein belongs to the cyclophilin-type PPIase family. PPIL4 subfamily.

The protein resides in the nucleus. It catalyses the reaction [protein]-peptidylproline (omega=180) = [protein]-peptidylproline (omega=0). PPIases accelerate the folding of proteins. It catalyzes the cis-trans isomerization of proline imidic peptide bonds in oligopeptides. The chain is Peptidyl-prolyl cis-trans isomerase-like 4 (cyp6) from Aspergillus oryzae (strain ATCC 42149 / RIB 40) (Yellow koji mold).